The chain runs to 506 residues: Steroid (22S)-hydroxylase (506 aa).

The chain crosses the membrane as a helical span at residues leucine 12–alanine 32. Cysteine 449 contributes to the heme binding site.

The protein belongs to the cytochrome P450 family. Requires heme as cofactor.

The protein resides in the membrane. It catalyses the reaction a C28-steroid + reduced [NADPH--hemoprotein reductase] + O2 = a (22S)-22-hydroxy C28-steroid + oxidized [NADPH--hemoprotein reductase] + H2O + H(+). The catalysed reaction is campesterol + reduced [NADPH--hemoprotein reductase] + O2 = (22S)-22-hydroxycampesterol + oxidized [NADPH--hemoprotein reductase] + H2O + H(+). The enzyme catalyses campestanol + reduced [NADPH--hemoprotein reductase] + O2 = 6-deoxycathasterone + oxidized [NADPH--hemoprotein reductase] + H2O + H(+). The protein operates within plant hormone biosynthesis; brassinosteroid biosynthesis. Its function is as follows. Catalyzes the C22-alpha-hydroxylation step in brassinosteroid biosynthesis, which is the rate-limiting step in this biosynthetic pathway. Catalyzes the conversion of campesterol (CR) to (22S)-22-hydroxycampesterol (22-OHCR, 22-hydroxyCR) and of campestanol (CN) to 6-deoxocathasterone (6-deoxoCT). This is Steroid (22S)-hydroxylase from Oryza sativa subsp. indica (Rice).